A 1380-amino-acid chain; its full sequence is DNA-directed RNA polymerase subunit beta (1380 aa).

The protein belongs to the RNA polymerase beta chain family. In terms of assembly, the RNAP catalytic core consists of 2 alpha, 1 beta, 1 beta' and 1 omega subunit. When a sigma factor is associated with the core the holoenzyme is formed, which can initiate transcription.

It catalyses the reaction RNA(n) + a ribonucleoside 5'-triphosphate = RNA(n+1) + diphosphate. Functionally, DNA-dependent RNA polymerase catalyzes the transcription of DNA into RNA using the four ribonucleoside triphosphates as substrates. This Alcanivorax borkumensis (strain ATCC 700651 / DSM 11573 / NCIMB 13689 / SK2) protein is DNA-directed RNA polymerase subunit beta.